Here is a 347-residue protein sequence, read N- to C-terminus: Protein YIPF1 homolog (347 aa).

The disordered stretch occupies residues methionine 1–asparagine 115. The Cytoplasmic portion of the chain corresponds to methionine 1–aspartate 166. Residues asparagine 34–threonine 47 are compositionally biased toward polar residues. 2 stretches are compositionally biased toward low complexity: residues glutamine 48–glutamine 67 and asparagine 76–asparagine 104. Residues lysine 105–asparagine 115 are compositionally biased toward polar residues. A helical membrane pass occupies residues leucine 167 to leucine 187. Residues asparagine 188–valine 207 are Lumenal-facing. A helical membrane pass occupies residues tyrosine 208–phenylalanine 228. At lysine 229–asparagine 232 the chain is on the cytoplasmic side. A helical transmembrane segment spans residues leucine 233–proline 253. Topologically, residues alanine 254–serine 255 are lumenal. Residues isoleucine 256–valine 276 traverse the membrane as a helical segment. Residues serine 277–arginine 296 are Cytoplasmic-facing. A helical transmembrane segment spans residues glycine 297–leucine 317. Residues tyrosine 318–leucine 347 are Lumenal-facing. 3 N-linked (GlcNAc...) asparagine glycosylation sites follow: asparagine 322, asparagine 326, and asparagine 342.

It belongs to the YIP1 family.

Its subcellular location is the golgi apparatus. It is found in the cis-Golgi network membrane. It localises to the trans-Golgi network membrane. The protein localises to the late endosome membrane. The polypeptide is Protein YIPF1 homolog (yipf1) (Dictyostelium discoideum (Social amoeba)).